We begin with the raw amino-acid sequence, 212 residues long: ATP phosphoribosyltransferase (212 aa).

The protein belongs to the ATP phosphoribosyltransferase family. Short subfamily. Heteromultimer composed of HisG and HisZ subunits.

The protein localises to the cytoplasm. The enzyme catalyses 1-(5-phospho-beta-D-ribosyl)-ATP + diphosphate = 5-phospho-alpha-D-ribose 1-diphosphate + ATP. It functions in the pathway amino-acid biosynthesis; L-histidine biosynthesis; L-histidine from 5-phospho-alpha-D-ribose 1-diphosphate: step 1/9. Functionally, catalyzes the condensation of ATP and 5-phosphoribose 1-diphosphate to form N'-(5'-phosphoribosyl)-ATP (PR-ATP). Has a crucial role in the pathway because the rate of histidine biosynthesis seems to be controlled primarily by regulation of HisG enzymatic activity. This Clostridium botulinum (strain Langeland / NCTC 10281 / Type F) protein is ATP phosphoribosyltransferase.